A 486-amino-acid chain; its full sequence is Mogroside I-E synthase (486 aa).

UDP-alpha-D-glucose contacts are provided by serine 302, cysteine 360, glutamine 362, tryptophan 380, asparagine 381, serine 382, glutamate 385, aspartate 401, and glutamine 402.

Belongs to the UDP-glycosyltransferase family. Highly expressed in young fruits 15 days after anthesis (15-DAA).

It carries out the reaction mogrol + UDP-alpha-D-glucose = mogroside IE + UDP + H(+). The enzyme catalyses mogroside I-A1 + UDP-alpha-D-glucose = mogroside IIE + UDP + H(+). The catalysed reaction is mogroside II-A1 + UDP-alpha-D-glucose = mogroside IIIX + UDP + H(+). It catalyses the reaction mogroside II-A + UDP-alpha-D-glucose = mogroside III + UDP + H(+). It participates in secondary metabolite biosynthesis; terpenoid biosynthesis. UDP-glycosyltransferase involved in the biosynthesis of cucurbitacin and mogroside tetracyclic triterpene natural products (e.g. siamenoside I and mogrosides IV, V and VI). Cucurbitacins have cytotoxic properties and exhibit deterrent taste as a defense barrier against herbivores. Mogrosides are nonsugar highly oxygenated compounds used as high-intensity zero-calorie sweeteners; they also possess pharmacological properties such as regulating immunity, lowering blood sugar and lipid levels, protecting the liver, and acting as antioxidants and antitumor agents. Catalyzes the C3 primary glucosylation of mogrol, mogroside I-A1, mogroside II-A1 and mogroside II-A. This chain is Mogroside I-E synthase, found in Siraitia grosvenorii (Monk's fruit).